The sequence spans 283 residues: 9,11-endoperoxide prostaglandin H2 reductase (283 aa).

NADP(+) contacts are provided by residues Val23 to Trp24 and Asp48. The active-site Proton donor is Tyr53. His111 is a substrate binding site. NADP(+)-binding positions include Ser140 to Asn141, Gln162, Trp188 to Ser193, Lys234 to Thr236, and Arg240 to Asn244. Residues Asn264–Ala283 are disordered.

Belongs to the aldo/keto reductase family. Monomer.

The protein localises to the cytoplasm. It catalyses the reaction prostaglandin F2alpha + NADP(+) = prostaglandin H2 + NADPH + H(+). Its pathway is lipid metabolism; prostaglandin biosynthesis. Its function is as follows. Catalyzes the NADP-dependent formation of prostaglandin F2-alpha from prostaglandin H2. Also has aldo/ketoreductase activity towards the synthetic substrates 9,10-phenanthrenequinone and p-nitrobenzaldehyde. This is 9,11-endoperoxide prostaglandin H2 reductase from Trypanosoma cruzi (strain CL Brener).